The chain runs to 265 residues: GTP cyclohydrolase FolE2 (265 aa).

It belongs to the GTP cyclohydrolase IV family.

It catalyses the reaction GTP + H2O = 7,8-dihydroneopterin 3'-triphosphate + formate + H(+). It participates in cofactor biosynthesis; 7,8-dihydroneopterin triphosphate biosynthesis; 7,8-dihydroneopterin triphosphate from GTP: step 1/1. Functionally, converts GTP to 7,8-dihydroneopterin triphosphate. This Magnetococcus marinus (strain ATCC BAA-1437 / JCM 17883 / MC-1) protein is GTP cyclohydrolase FolE2.